Here is a 381-residue protein sequence, read N- to C-terminus: MHLLAILFCALWSAVLAENSDDYDLMYVNLDNEIDNGLHPTEDPTPCACGQEHSEWDKLFIMLENSQMRERMLLQATDDVLRGELQRLREELGRLAESLARPCAPGAPAEARLTSALDELLQATRDAGRRLARMEGAEAQRPEEAGRALAAVLEELRQTRADLHAVQGWAARSWLPAGCETAILFPMRSKKIFGSVHPVRPMRLESFSACIWVKATDVLNKTILFSYGTKRNPYEIQLYLSYQSIVFVVGGEENKLVAEAMVSLGRWTHLCGTWNSEEGLTSLWVNGELAATTVEMATGHIVPEGGILQIGQEKNGCCVGGGFDETLAFSGRLTGFNIWDSVLSNEEIRETGGAESCHIRGNIVGWGVTEIQPHGGAQYVS.

A signal peptide spans 1 to 17; sequence MHLLAILFCALWSAVLA. 2 coiled-coil regions span residues 74–101 and 143–167; these read LQAT…SLAR and EEAG…HAVQ. Cystine bridges form between Cys-179-Cys-357 and Cys-210-Cys-271. Residues 179-381 enclose the Pentraxin (PTX) domain; sequence CETAILFPMR…QPHGGAQYVS (203 aa). Asn-220 carries N-linked (GlcNAc...) asparagine glycosylation.

As to quaternary structure, homooctamer; disulfide-linked. Binds to C1q. In terms of assembly, (Microbial infection) Interacts with SARS coronavirus-2/SARS-CoV-2 Nucleoprotein and Spike protein homotrimer. Post-translationally, glycosylated.

It localises to the secreted. Its function is as follows. Plays a role in the regulation of innate resistance to pathogens, inflammatory reactions, possibly clearance of self-components and female fertility. The polypeptide is Pentraxin-related protein PTX3 (Homo sapiens (Human)).